A 142-amino-acid chain; its full sequence is Large ribosomal subunit protein uL13 (142 aa).

Belongs to the universal ribosomal protein uL13 family. In terms of assembly, part of the 50S ribosomal subunit.

In terms of biological role, this protein is one of the early assembly proteins of the 50S ribosomal subunit, although it is not seen to bind rRNA by itself. It is important during the early stages of 50S assembly. The protein is Large ribosomal subunit protein uL13 of Maridesulfovibrio salexigens (strain ATCC 14822 / DSM 2638 / NCIMB 8403 / VKM B-1763) (Desulfovibrio salexigens).